The following is a 156-amino-acid chain: 6,7-dimethyl-8-ribityllumazine synthase (156 aa).

5-amino-6-(D-ribitylamino)uracil contacts are provided by residues F22, 57–59 (AYE), and 81–83 (TVI). 86 to 87 (GT) provides a ligand contact to (2S)-2-hydroxy-3-oxobutyl phosphate. H89 acts as the Proton donor in catalysis. F114 serves as a coordination point for 5-amino-6-(D-ribitylamino)uracil. Position 128 (R128) interacts with (2S)-2-hydroxy-3-oxobutyl phosphate.

This sequence belongs to the DMRL synthase family. Forms an icosahedral capsid composed of 60 subunits, arranged as a dodecamer of pentamers.

The catalysed reaction is (2S)-2-hydroxy-3-oxobutyl phosphate + 5-amino-6-(D-ribitylamino)uracil = 6,7-dimethyl-8-(1-D-ribityl)lumazine + phosphate + 2 H2O + H(+). It participates in cofactor biosynthesis; riboflavin biosynthesis; riboflavin from 2-hydroxy-3-oxobutyl phosphate and 5-amino-6-(D-ribitylamino)uracil: step 1/2. Functionally, catalyzes the formation of 6,7-dimethyl-8-ribityllumazine by condensation of 5-amino-6-(D-ribitylamino)uracil with 3,4-dihydroxy-2-butanone 4-phosphate. This is the penultimate step in the biosynthesis of riboflavin. This is 6,7-dimethyl-8-ribityllumazine synthase from Yersinia enterocolitica serotype O:8 / biotype 1B (strain NCTC 13174 / 8081).